The sequence spans 143 residues: uncharacterized protein (143 aa).

The transit peptide at 1 to 38 (MKYWKYLSQLTIRRPLTYNNALLYRNRFPSILTWKRSA) directs the protein to the mitochondrion.

The protein localises to the mitochondrion. This is an uncharacterized protein from Schizosaccharomyces pombe (strain 972 / ATCC 24843) (Fission yeast).